The primary structure comprises 282 residues: Pantothenate synthetase (282 aa).

Methionine 29–histidine 36 provides a ligand contact to ATP. The active-site Proton donor is histidine 36. Glutamine 60 is a binding site for (R)-pantoate. Glutamine 60 lines the beta-alanine pocket. Glycine 146 to aspartate 149 is a binding site for ATP. (R)-pantoate is bound at residue glutamine 152. Residues isoleucine 175 and lysine 183–arginine 186 each bind ATP.

It belongs to the pantothenate synthetase family. As to quaternary structure, homodimer.

The protein resides in the cytoplasm. It catalyses the reaction (R)-pantoate + beta-alanine + ATP = (R)-pantothenate + AMP + diphosphate + H(+). Its pathway is cofactor biosynthesis; (R)-pantothenate biosynthesis; (R)-pantothenate from (R)-pantoate and beta-alanine: step 1/1. Catalyzes the condensation of pantoate with beta-alanine in an ATP-dependent reaction via a pantoyl-adenylate intermediate. The sequence is that of Pantothenate synthetase from Clostridioides difficile (strain 630) (Peptoclostridium difficile).